A 214-amino-acid polypeptide reads, in one-letter code: MSKPPPKPVKPGQVKVFRALYTFEPRTPDELYFEEGDILYIADMSDTNWWKGTCKGKTGLIPSNYVAEQAESIDNPLHEAAKRGNLSWLRECLENRVGVNGLDKAGSTALYWGCHGGHKDVVDMLLAQPNIELNQQNKLGDTALHAAAWKGYADIVELLLVKGARTDLRNNEKKLALDMATNAQCASLLKKKQAQGIVRTSSNADEYLDDEDSD.

Residues 12–71 (GQVKVFRALYTFEPRTPDELYFEEGDILYIADMSDTNWWKGTCKGKTGLIPSNYVAEQAE) form the SH3 domain. ANK repeat units lie at residues 72–101 (SIDNPLHEAAKRGNLSWLRECLENRVGVNG), 105–135 (AGSTALYWGCHGGHKDVVDMLLAQPNIELNQ), and 139–168 (LGDTALHAAAWKGYADIVELLLVKGARTDL).

It is found in the cytoplasm. In terms of biological role, induces bone resorption, acting probably through a signaling cascade which results in the secretion of factor(s) enhancing osteoclast formation and activity. This is Osteoclast-stimulating factor 1 (ostf1) from Xenopus laevis (African clawed frog).